Reading from the N-terminus, the 263-residue chain is Adaptin ear-binding coat-associated protein 2 (263 aa).

2 disordered regions span residues 167-191 and 209-263; these read KKEGAAGAPRTRPASAGGLSLLPPP and GGSL…WVQF. Residue Ser181 is modified to Phosphoserine. 2 short sequence motifs (WXXF motif) span residues 218 to 221 and 238 to 241; these read GSGG and DIWG. The segment covering 246–263 has biased composition (low complexity); the sequence is STGSPSSQSQPGTGWVQF.

This sequence belongs to the NECAP family. As to quaternary structure, interacts with AP1G1 and AP2A1 components of the adapter protein complexes AP-1 and AP-2. Interacts with the GAE domain proteins GGA1, GGA2 and GGA3. In terms of tissue distribution, expressed in brain, heart, kidney, liver and lung (at protein level).

The protein resides in the cytoplasmic vesicle. Its subcellular location is the clathrin-coated vesicle membrane. It is found in the cell membrane. In terms of biological role, involved in endocytosis. The chain is Adaptin ear-binding coat-associated protein 2 (Necap2) from Rattus norvegicus (Rat).